Here is a 73-residue protein sequence, read N- to C-terminus: UPF0346 protein SH1485 (73 aa).

It belongs to the UPF0346 family.

In Staphylococcus haemolyticus (strain JCSC1435), this protein is UPF0346 protein SH1485.